A 152-amino-acid chain; its full sequence is Transcriptional repressor NrdR (152 aa).

The disordered stretch occupies residues 1–21 (MRCPFCGNGDTQVKDSRPTED). A zinc finger spans residues 3-34 (CPFCGNGDTQVKDSRPTEDSAAIRRRRFCPAC). The span at 12-21 (QVKDSRPTED) shows a compositional bias: basic and acidic residues. The ATP-cone domain occupies 49–139 (LVIVKKDGQR…VYRNFREAKD (91 aa)).

This sequence belongs to the NrdR family. The cofactor is Zn(2+).

In terms of biological role, negatively regulates transcription of bacterial ribonucleotide reductase nrd genes and operons by binding to NrdR-boxes. This Rhodospirillum rubrum (strain ATCC 11170 / ATH 1.1.1 / DSM 467 / LMG 4362 / NCIMB 8255 / S1) protein is Transcriptional repressor NrdR.